The chain runs to 73 residues: Protein kish (73 aa).

Positions 1–21 (MTAIFNFESLLFVILLTICTC) are cleaved as a signal peptide. The Lumenal segment spans residues 22–52 (TYLHRQFPALLEKRKEGVTMVFWKCARIGER). The chain crosses the membrane as a helical span at residues 53–73 (ASPYISLFCVFMALRFIFGSS).

This sequence belongs to the KISH family.

It is found in the golgi apparatus membrane. Its subcellular location is the endoplasmic reticulum membrane. Its function is as follows. Involved in the early part of the secretory pathway. The protein is Protein kish (ksh1) of Schizosaccharomyces pombe (strain 972 / ATCC 24843) (Fission yeast).